The following is a 66-amino-acid chain: Beta-mammal toxin Cv5 (66 aa).

The region spanning lysine 1–asparagine 66 is the LCN-type CS-alpha/beta domain. Cystine bridges form between cysteine 12–cysteine 65, cysteine 16–cysteine 41, cysteine 25–cysteine 46, and cysteine 29–cysteine 48.

As to expression, expressed by the venom gland.

The protein localises to the secreted. Is susceptible to be neutralized by human antibodies scFvs 10FG2 and HV. Functionally, beta toxins bind voltage-independently at site-4 of sodium channels (Nav) and reduces peak current and shifts the voltage of activation toward more negative potentials thereby affecting sodium channel activation and promoting spontaneous and repetitive firing. This toxin is moderately toxic to mice. The polypeptide is Beta-mammal toxin Cv5 (Centruroides villegasi (Scorpion)).